The primary structure comprises 580 residues: Protein O-linked-mannose beta-1,4-N-acetylglucosaminyltransferase 2 (580 aa).

Topologically, residues 1 to 4 are cytoplasmic; sequence MHLS. Residues 5–25 traverse the membrane as a helical; Signal-anchor for type II membrane protein segment; the sequence is AVFNALLVSVLAAVLWKHVRL. Topologically, residues 26–580 are lumenal; that stretch reads REHAATLEEE…PFADVLVCNT (555 aa). N-linked (GlcNAc...) asparagine glycosylation is found at Asn-99 and Asn-276. The 93-residue stretch at 488–580 folds into the Fibronectin type-III domain; that stretch reads ARCQASVHGA…PFADVLVCNT (93 aa).

It belongs to the glycosyltransferase 61 family. As to expression, highly expressed in the brain, muscle, heart, and kidney in both fetus and adult. In the brain, highest expression in the cortex and cerebellum. Highly expressed in the pancreas.

The protein resides in the endoplasmic reticulum membrane. The catalysed reaction is 3-O-(alpha-D-mannosyl)-L-threonyl-[protein] + UDP-N-acetyl-alpha-D-glucosamine = 3-O-(N-acetyl-beta-D-glucosaminyl-(1-&gt;4)-alpha-D-mannosyl)-L-threonyl-[protein] + UDP + H(+). It participates in protein modification; protein glycosylation. In terms of biological role, O-linked mannose beta-1,4-N-acetylglucosaminyltransferase that transfers UDP-N-acetyl-D-glucosamine to the 4-position of the mannose to generate N-acetyl-D-glucosamine-beta-1,4-O-D-mannosylprotein. Involved in the biosynthesis of the phosphorylated O-mannosyl trisaccharide (N-acetylgalactosamine-beta-3-N-acetylglucosamine-beta-4-(phosphate-6-)mannose), a carbohydrate structure present in alpha-dystroglycan (DAG1), which is required for binding laminin G-like domain-containing extracellular proteins with high affinity. The chain is Protein O-linked-mannose beta-1,4-N-acetylglucosaminyltransferase 2 (POMGNT2) from Homo sapiens (Human).